A 258-amino-acid polypeptide reads, in one-letter code: NAD-dependent protein deacylase (258 aa).

One can recognise a Deacetylase sirtuin-type domain in the interval 3-258 (ERQLEKSIEH…LPALMRGLSA (256 aa)). Position 28–48 (28–48 (GAGMSADSGLETYRDDKTGLW)) interacts with NAD(+). Residues tyrosine 73 and arginine 76 each coordinate substrate. 109 to 112 (QNID) is a binding site for NAD(+). The active-site Proton acceptor is the histidine 127. Residues cysteine 135, cysteine 138, cysteine 161, and cysteine 164 each contribute to the Zn(2+) site. NAD(+) contacts are provided by residues 201–203 (GTS) and alanine 245.

Belongs to the sirtuin family. Class III subfamily. Requires Zn(2+) as cofactor.

It is found in the cytoplasm. It catalyses the reaction N(6)-acetyl-L-lysyl-[protein] + NAD(+) + H2O = 2''-O-acetyl-ADP-D-ribose + nicotinamide + L-lysyl-[protein]. The enzyme catalyses N(6)-succinyl-L-lysyl-[protein] + NAD(+) + H2O = 2''-O-succinyl-ADP-D-ribose + nicotinamide + L-lysyl-[protein]. In terms of biological role, NAD-dependent lysine deacetylase and desuccinylase that specifically removes acetyl and succinyl groups on target proteins. Modulates the activities of several proteins which are inactive in their acylated form. This Corynebacterium glutamicum (strain ATCC 13032 / DSM 20300 / JCM 1318 / BCRC 11384 / CCUG 27702 / LMG 3730 / NBRC 12168 / NCIMB 10025 / NRRL B-2784 / 534) protein is NAD-dependent protein deacylase.